Consider the following 207-residue polypeptide: Protein-L-isoaspartate O-methyltransferase (207 aa).

The active site involves serine 56.

The protein belongs to the methyltransferase superfamily. L-isoaspartyl/D-aspartyl protein methyltransferase family.

It is found in the cytoplasm. The enzyme catalyses [protein]-L-isoaspartate + S-adenosyl-L-methionine = [protein]-L-isoaspartate alpha-methyl ester + S-adenosyl-L-homocysteine. Its function is as follows. Catalyzes the methyl esterification of L-isoaspartyl residues in peptides and proteins that result from spontaneous decomposition of normal L-aspartyl and L-asparaginyl residues. It plays a role in the repair and/or degradation of damaged proteins. The protein is Protein-L-isoaspartate O-methyltransferase of Pyrobaculum neutrophilum (strain DSM 2338 / JCM 9278 / NBRC 100436 / V24Sta) (Thermoproteus neutrophilus).